Reading from the N-terminus, the 514-residue chain is Anthranilate synthase component 1 (514 aa).

Residues T40 and 290 to 292 (PYM) contribute to the L-tryptophan site. Position 327-328 (327-328 (GT)) interacts with chorismate. E360 is a Mg(2+) binding site. Chorismate contacts are provided by residues Y448, R468, 482 to 484 (GAG), and G484. E497 contacts Mg(2+).

Belongs to the anthranilate synthase component I family. In terms of assembly, heterotetramer consisting of two non-identical subunits: a beta subunit (TrpG) and a large alpha subunit (TrpE). It depends on Mg(2+) as a cofactor.

The catalysed reaction is chorismate + L-glutamine = anthranilate + pyruvate + L-glutamate + H(+). It participates in amino-acid biosynthesis; L-tryptophan biosynthesis; L-tryptophan from chorismate: step 1/5. Feedback inhibited by tryptophan. Functionally, part of a heterotetrameric complex that catalyzes the two-step biosynthesis of anthranilate, an intermediate in the biosynthesis of L-tryptophan. In the first step, the glutamine-binding beta subunit (TrpG) of anthranilate synthase (AS) provides the glutamine amidotransferase activity which generates ammonia as a substrate that, along with chorismate, is used in the second step, catalyzed by the large alpha subunit of AS (TrpE) to produce anthranilate. In the absence of TrpG, TrpE can synthesize anthranilate directly from chorismate and high concentrations of ammonia. The protein is Anthranilate synthase component 1 (trpE) of Buchnera aphidicola subsp. Rhopalosiphum padi.